The sequence spans 293 residues: Ribosomal RNA small subunit methyltransferase A (293 aa).

Residues asparagine 33, valine 35, glycine 60, glutamate 81, aspartate 111, and asparagine 130 each coordinate S-adenosyl-L-methionine.

The protein belongs to the class I-like SAM-binding methyltransferase superfamily. rRNA adenine N(6)-methyltransferase family. RsmA subfamily.

Its subcellular location is the cytoplasm. It catalyses the reaction adenosine(1518)/adenosine(1519) in 16S rRNA + 4 S-adenosyl-L-methionine = N(6)-dimethyladenosine(1518)/N(6)-dimethyladenosine(1519) in 16S rRNA + 4 S-adenosyl-L-homocysteine + 4 H(+). Functionally, specifically dimethylates two adjacent adenosines (A1518 and A1519) in the loop of a conserved hairpin near the 3'-end of 16S rRNA in the 30S particle. May play a critical role in biogenesis of 30S subunits. This Corynebacterium glutamicum (strain R) protein is Ribosomal RNA small subunit methyltransferase A.